Reading from the N-terminus, the 78-residue chain is Major outer membrane lipoprotein Lpp (78 aa).

The signal sequence occupies residues 1 to 20 (MKATKLVLGAVILGSTLLAG). Cys-21 carries N-palmitoyl cysteine lipidation. Cys-21 carries the S-diacylglycerol cysteine lipid modification. Repeats lie at residues 24 to 34 (NAKIDQLSSDV) and 38 to 48 (NAKVDQLSNDV). Residues 27-75 (IDQLSSDVQTLNAKVDQLSNDVNAMRSDVQAAKDDAARANQRLDNMATK) are a coiled coil. Lys-78 carries the post-translational modification N6-murein peptidoglycan lysine.

The protein belongs to the Lpp family. Homotrimer.

It localises to the cell outer membrane. The protein resides in the secreted. The protein localises to the cell wall. Functionally, a highly abundant outer membrane lipoprotein that controls the distance between the inner and outer membranes. The only protein known to be covalently linked to the peptidoglycan network (PGN). Also non-covalently binds the PGN. The link between the cell outer membrane and PGN contributes to maintenance of the structural and functional integrity of the cell envelope, and maintains the correct distance between the PGN and the outer membrane. In Shigella flexneri, this protein is Major outer membrane lipoprotein Lpp.